The following is a 148-amino-acid chain: Nucleoside diphosphate kinase 1 (148 aa).

The ATP site is built by Lys9, Phe57, Arg85, Thr91, Arg102, and Asn112. The active-site Pros-phosphohistidine intermediate is His115.

It belongs to the NDK family. Requires Mg(2+) as cofactor.

It carries out the reaction a 2'-deoxyribonucleoside 5'-diphosphate + ATP = a 2'-deoxyribonucleoside 5'-triphosphate + ADP. It catalyses the reaction a ribonucleoside 5'-diphosphate + ATP = a ribonucleoside 5'-triphosphate + ADP. Major role in the synthesis of nucleoside triphosphates other than ATP. The ATP gamma phosphate is transferred to the NDP beta phosphate via a ping-pong mechanism, using a phosphorylated active-site intermediate. This Mesembryanthemum crystallinum (Common ice plant) protein is Nucleoside diphosphate kinase 1 (NDKP1).